Here is a 390-residue protein sequence, read N- to C-terminus: Pyruvate dehydrogenase E1 component subunit alpha, somatic form, mitochondrial (390 aa).

The transit peptide at 1–29 (MRKMLAAVSRVLSGASQKPASRVLVASRN) directs the protein to the mitochondrion. Position 63 is an N6-acetyllysine; alternate (Lys63). Position 63 is an N6-succinyllysine; alternate (Lys63). Positions 92, 118, 119, 157, 165, 167, 196, 197, 198, 225, and 227 each coordinate pyruvate. Residues Tyr118 and Arg119 each coordinate thiamine diphosphate. The thiamine diphosphate site is built by Gly165, Val167, Asp196, Gly197, Ala198, and Asn225. Residue Asp196 coordinates Mg(2+). Residues Asn225 and Tyr227 each contribute to the Mg(2+) site. Ser232 is modified (phosphoserine; by PDK1). Lys244 carries the post-translational modification N6-acetyllysine; alternate. The residue at position 244 (Lys244) is an N6-succinyllysine; alternate. N6-succinyllysine is present on Lys277. His292 contributes to the thiamine diphosphate binding site. Ser293 carries the post-translational modification Phosphoserine; by PDK1, PDK2, PDK3 and PDK4. Residue Ser295 is modified to Phosphoserine. Phosphoserine; by PDK1, PDK2, PDK3 and PDK4 is present on Ser300. Tyr301 carries the phosphotyrosine modification. At Lys313 the chain carries N6-acetyllysine; alternate. Residue Lys313 is modified to N6-succinyllysine; alternate. Lys321 and Lys336 each carry N6-acetyllysine. Lys385 is modified (N6-succinyllysine).

In terms of assembly, heterotetramer of two PDHA1 and two PDHB subunits. The heterotetramer interacts with DLAT, and is part of the multimeric pyruvate dehydrogenase complex that contains multiple copies of pyruvate dehydrogenase (E1), dihydrolipoamide acetyltransferase (DLAT, E2) and lipoamide dehydrogenase (DLD, E3). These subunits are bound to an inner core composed of about 48 DLAT and 12 PDHX molecules. The cofactor is thiamine diphosphate. Mg(2+) is required as a cofactor. In terms of processing, phosphorylation at Ser-232, Ser-293 and Ser-300 by PDK family kinases inactivates the enzyme; for this phosphorylation at a single site is sufficient. Dephosphorylation at all three sites, i.e. at Ser-232, Ser-293 and Ser-300, is required for reactivation. Acetylation alters the phosphorylation pattern. Deacetylated by SIRT3. Ubiquitous.

Its subcellular location is the mitochondrion matrix. It carries out the reaction N(6)-[(R)-lipoyl]-L-lysyl-[protein] + pyruvate + H(+) = N(6)-[(R)-S(8)-acetyldihydrolipoyl]-L-lysyl-[protein] + CO2. With respect to regulation, pyruvate dehydrogenase activity is inhibited by phosphorylation of PDHA1; it is reactivated by dephosphorylation. In terms of biological role, the pyruvate dehydrogenase complex catalyzes the overall conversion of pyruvate to acetyl-CoA and CO(2), and thereby links the glycolytic pathway to the tricarboxylic cycle. The polypeptide is Pyruvate dehydrogenase E1 component subunit alpha, somatic form, mitochondrial (PDHA1) (Homo sapiens (Human)).